We begin with the raw amino-acid sequence, 572 residues long: Urease subunit alpha (572 aa).

The region spanning 134 to 572 (GGIDAHVHMI…VSLGQLYFFS (439 aa)) is the Urease domain. Ni(2+)-binding residues include H139, H141, and K222. N6-carboxylysine is present on K222. H224 is a binding site for substrate. 2 residues coordinate Ni(2+): H251 and H277. The active-site Proton donor is H325. Ni(2+) is bound at residue D365.

Belongs to the metallo-dependent hydrolases superfamily. Urease alpha subunit family. In terms of assembly, heterotrimer of UreA (gamma), UreB (beta) and UreC (alpha) subunits. Three heterotrimers associate to form the active enzyme. Requires Ni cation as cofactor. In terms of processing, carboxylation allows a single lysine to coordinate two nickel ions.

Its subcellular location is the cytoplasm. It carries out the reaction urea + 2 H2O + H(+) = hydrogencarbonate + 2 NH4(+). It participates in nitrogen metabolism; urea degradation; CO(2) and NH(3) from urea (urease route): step 1/1. The sequence is that of Urease subunit alpha from Laribacter hongkongensis (strain HLHK9).